A 524-amino-acid polypeptide reads, in one-letter code: Probable endopeptidase p60 (524 aa).

The N-terminal stretch at 1–27 (MNMKKATIAATAGIAVTAFAAPTIASA) is a signal peptide. A LysM 1 domain is found at 28-71 (STVVVEAGDTLWGIAQSKGTTVDALKKANNLTSDKIVPGQKLQV). The SH3b domain occupies 78–142 (KTEKSVSATW…VNGKYLGDAV (65 aa)). The segment at 150–188 (QEVKQETTKQTAPAAETKTEVKQSTPAPTAPKAAETKTA) is disordered. The segment covering 174-188 (TPAPTAPKAAETKTA) has biased composition (low complexity). The 44-residue stretch at 196–239 (TTHTVKSGDTIWALSVKYGASVQDLMSWNNLSSSSIYVGQKIAV) folds into the LysM 2 domain. The segment covering 272–299 (NTNTTVKKEVTTQTQTNTTKAPAQAAKP) has biased composition (low complexity). The interval 272–313 (NTNTTVKKEVTTQTQTNTTKAPAQAAKPAPAPAPAPTVNTNA) is disordered. Positions 314 to 357 (STYTVKSGDSLSKIANTFGTSVSKIKALNNLTSDNLQVGTVLKV) constitute a LysM 3 domain. The segment at 360–408 (TVPTTNTNNNSNTTAPTTNTSNNNTSSNTSTPSKNTNTNTNQGSSNSAS) is disordered. A compositionally biased stretch (low complexity) spans 362 to 408 (PTTNTNNNSNTTAPTTNTSNNNTSSNTSTPSKNTNTNTNQGSSNSAS). The NlpC/P60 domain occupies 406-524 (SASASALIAE…GKYLVGFGRV (119 aa)). C436 functions as the Nucleophile in the catalytic mechanism. The active-site Proton acceptor is the H486. Residue N498 is part of the active site.

This sequence belongs to the peptidase C40 family.

Functionally, this major extracellular protein may be involved in the invasion of non-professional phagocytic cells by Listeria. This is Probable endopeptidase p60 (iap) from Listeria welshimeri.